The primary structure comprises 200 residues: Recombination protein RecR (200 aa).

Residues 60–75 form a C4-type zinc finger; that stretch reads CVYCQALTEDDVCNIC. Positions 83-177 constitute a Toprim domain; sequence TKLCIIESML…KISRIGFGVP (95 aa).

This sequence belongs to the RecR family.

Its function is as follows. May play a role in DNA repair. It seems to be involved in an RecBC-independent recombinational process of DNA repair. It may act with RecF and RecO. The protein is Recombination protein RecR of Francisella tularensis subsp. mediasiatica (strain FSC147).